The chain runs to 110 residues: Phosphoribosyl-ATP pyrophosphatase (110 aa).

This sequence belongs to the PRA-PH family.

The protein localises to the cytoplasm. It carries out the reaction 1-(5-phospho-beta-D-ribosyl)-ATP + H2O = 1-(5-phospho-beta-D-ribosyl)-5'-AMP + diphosphate + H(+). It functions in the pathway amino-acid biosynthesis; L-histidine biosynthesis; L-histidine from 5-phospho-alpha-D-ribose 1-diphosphate: step 2/9. The sequence is that of Phosphoribosyl-ATP pyrophosphatase from Hahella chejuensis (strain KCTC 2396).